Reading from the N-terminus, the 311-residue chain is CD-NTase-associated protein 12 (311 aa).

In terms of domain architecture, TIR spans Arg4–Glu121. Residues Ser157 to Glu311 are STING domain. 3',3'-c-di-GMP contacts are provided by Phe168, Pro232, and Asp249.

The protein in the C-terminal section; belongs to the bacterial STING family. As to quaternary structure, forms homodimers; in the presence of c-di-GMP forms filaments with an ordered array of parallel-stacked subunits.

It carries out the reaction NAD(+) + H2O = ADP-D-ribose + nicotinamide + H(+). Its activity is regulated as follows. NAD(+) hydrolase activity is strongly stimulated by c-di-GMP, weakly by 3'3'-cGAMP, very weakly by c-di-AMP but not at all by 2'3'-cGAMP. Self-association of TIR domains is required for NADase activity. Functionally, effector protein of a CBASS antiviral system with NAD(+) hydrolase activity. CBASS (cyclic oligonucleotide-based antiphage signaling system) provides immunity against bacteriophage. The CD-NTase protein synthesizes cyclic nucleotides in response to infection; these serve as specific second messenger signals. The signals activate a diverse range of effectors, leading to bacterial cell death and thus abortive phage infection. A type I-D CBASS(GG) system. Its function is as follows. Binds c-di-GMP, does not bind cUMP-AMP. Upon activation by c-di-GMP forms filaments which hydrolyze NAD(+); filament formation is required for enzyme activation. This Flavobacterium daejeonense protein is CD-NTase-associated protein 12.